The primary structure comprises 562 residues: Methionine--tRNA ligase, mitochondrial (562 aa).

The transit peptide at Met1–Phe10 directs the protein to the mitochondrion. A 'HIGH' region motif is present at residues Phe43 to His53. A 'KMSKS' region motif is present at residues Lys332 to Ser336. Lys335 provides a ligand contact to ATP.

This sequence belongs to the class-I aminoacyl-tRNA synthetase family.

The protein resides in the mitochondrion matrix. The catalysed reaction is tRNA(Met) + L-methionine + ATP = L-methionyl-tRNA(Met) + AMP + diphosphate. In Xenopus laevis (African clawed frog), this protein is Methionine--tRNA ligase, mitochondrial (mars2).